A 256-amino-acid chain; its full sequence is Thiazole synthase (256 aa).

Catalysis depends on lysine 96, which acts as the Schiff-base intermediate with DXP. 1-deoxy-D-xylulose 5-phosphate is bound by residues glycine 157, 183–184 (AG), and 205–206 (NT).

This sequence belongs to the ThiG family. In terms of assembly, homotetramer. Forms heterodimers with either ThiH or ThiS.

The protein resides in the cytoplasm. The enzyme catalyses [ThiS sulfur-carrier protein]-C-terminal-Gly-aminoethanethioate + 2-iminoacetate + 1-deoxy-D-xylulose 5-phosphate = [ThiS sulfur-carrier protein]-C-terminal Gly-Gly + 2-[(2R,5Z)-2-carboxy-4-methylthiazol-5(2H)-ylidene]ethyl phosphate + 2 H2O + H(+). The protein operates within cofactor biosynthesis; thiamine diphosphate biosynthesis. Catalyzes the rearrangement of 1-deoxy-D-xylulose 5-phosphate (DXP) to produce the thiazole phosphate moiety of thiamine. Sulfur is provided by the thiocarboxylate moiety of the carrier protein ThiS. In vitro, sulfur can be provided by H(2)S. In Clostridium beijerinckii (strain ATCC 51743 / NCIMB 8052) (Clostridium acetobutylicum), this protein is Thiazole synthase.